Consider the following 336-residue polypeptide: tRNA-modifying protein YgfZ (336 aa).

Folate-binding residues include tryptophan 28 and tryptophan 191.

Belongs to the tRNA-modifying YgfZ family.

It localises to the cytoplasm. In terms of biological role, folate-binding protein involved in regulating the level of ATP-DnaA and in the modification of some tRNAs. It is probably a key factor in regulatory networks that act via tRNA modification, such as initiation of chromosomal replication. The chain is tRNA-modifying protein YgfZ from Hamiltonella defensa subsp. Acyrthosiphon pisum (strain 5AT).